Consider the following 69-residue polypeptide: Atypical cationic antimicrobial peptide (69 aa).

The first 22 residues, 1-22 (MAFLKKSLFLVLFLGLVSLSIC), serve as a signal peptide directing secretion. Positions 23 to 45 (DEEKRENEDEENQEDDEQSEMRR) are excised as a propeptide. The segment at 25 to 45 (EKRENEDEENQEDDEQSEMRR) is disordered. Residues 30-40 (EDEENQEDDEQ) are compositionally biased toward acidic residues.

It belongs to the frog skin active peptide (FSAP) family. As to quaternary structure, monomer and/or weakly self-associated, oligomer, and amyloid-like fibril. Can adopt a monomeric nonamphipathic alpha-helical conformation, possibly with the aid of its cationic N- and C-termini, when bound to anionic membranes. Forms stable and ordered beta-sheet aggregates in aqueous environment or when bound to anionic or zwitterionic phospholipid vesicles. Expressed by the skin glands.

It is found in the secreted. The protein localises to the target cell membrane. Atypical cationic antimicrobial peptide with potent activity against Gram-negative and Gram-positive bacteria. Acts by inducing permeabilization of bacterial membrane. In vitro, also shows chemoattractant activity, which is mediated through a G protein-coupled receptor (probably FPR2 coupled to the ERK1/2 MAPK kinase pathway). Has slow-kinetic self-association and amyloid-like properties that modulate its activity. The soluble, weakly self-associated forms act on leukocytes to promote chemotaxis but have low antibacterial activity, the oligomers exhibit potent antimicrobial activity, whereas the amyloid-like fibrils have a very weak antibacterial activity. The membrane composition has a great influence on the peptide behavior. The peptide induces membrane leakage and insertion to a lesser extent in model membranes of the anionic lipid phosphatidylglycerol (PG) than in the model membranes of the zwitterionic lipid phosphatidylcholine (PC) vesicles. It forms more fibrils in PC than in PG. Membrane perturbations are more observed in the presence of PG than in the presence of PC. The peptide shows low hemolytic activity. This Phyllomedusa sauvagei (Sauvage's leaf frog) protein is Atypical cationic antimicrobial peptide.